The chain runs to 344 residues: Ferrochelatase (344 aa).

Fe cation-binding residues include histidine 191 and glutamate 271.

The protein belongs to the ferrochelatase family.

It localises to the cytoplasm. It carries out the reaction heme b + 2 H(+) = protoporphyrin IX + Fe(2+). It participates in porphyrin-containing compound metabolism; protoheme biosynthesis; protoheme from protoporphyrin-IX: step 1/1. Catalyzes the ferrous insertion into protoporphyrin IX. The protein is Ferrochelatase of Pelagibacter ubique (strain HTCC1062).